The chain runs to 425 residues: Actin-related protein 3 (425 aa).

Belongs to the actin family. ARP3 subfamily. Component of the Arp2/3 complex, at least composed of arx-1, arx-2, arx-4 and arx-6.

The protein resides in the cytoplasm. It localises to the cytoskeleton. Its function is as follows. Functions as ATP-binding component of the Arp2/3 complex which is involved in regulation of actin polymerization and together with an activating nucleation-promoting factor (NPF) mediates the formation of branched actin networks. Seems to contact the pointed end of the daughter actin filament. Plays a role in time-dependent memory loss and the retention of conditioned behavior over time. The sequence is that of Actin-related protein 3 from Caenorhabditis elegans.